The chain runs to 546 residues: U3 small nucleolar RNA-associated protein 18 homolog (546 aa).

Disordered regions lie at residues 1–55 (MSLS…LEES), 94–118 (SAVR…EENG), and 177–205 (NPGT…DGGV). Basic and acidic residues predominate over residues 13–23 (IKREELKKQYE). Residues 24-35 (DVEDEEEIGSDD) are compositionally biased toward acidic residues. Position 33 is a phosphoserine (serine 33). The segment covering 45–55 (TEKEKQKLEES) has biased composition (basic and acidic residues). 2 stretches are compositionally biased toward acidic residues: residues 101-117 (DYED…DEEN) and 193-205 (ESSD…DGGV). 4 WD repeats span residues 242–281 (PSNG…NTKI), 372–411 (KMNG…CLYK), 413–454 (VDEG…GGKR), and 509–545 (STMH…HYQN). A DWD box motif is present at residues 389-404 (LLSSGGDGQVYVWDLR).

Belongs to the WD repeat UTP18 family.

The protein localises to the nucleus. It localises to the nucleolus. Its function is as follows. Involved in nucleolar processing of pre-18S ribosomal RNA. This Arabidopsis thaliana (Mouse-ear cress) protein is U3 small nucleolar RNA-associated protein 18 homolog.